Here is a 512-residue protein sequence, read N- to C-terminus: Respiratory nitrate reductase 1 beta chain (512 aa).

4Fe-4S ferredoxin-type domains are found at residues 7–35 (VGMV…SREG), 175–206 (TFMM…KREE), and 208–237 (GIVL…FNWK). 7 residues coordinate [4Fe-4S] cluster: Cys-16, Cys-19, Cys-22, Cys-26, Cys-184, Cys-187, and Cys-192. Cys-196, Cys-217, and Cys-223 together coordinate [3Fe-4S] cluster. Positions 227, 244, 247, 259, and 263 each coordinate [4Fe-4S] cluster.

As to quaternary structure, dimer of heterotrimers each composed of an alpha, a beta and a gamma chain. Alpha and beta are catalytic chains; gamma chains are involved in binding the enzyme complex to the cytoplasmic membrane. [4Fe-4S] cluster is required as a cofactor. Requires [3Fe-4S] cluster as cofactor.

It is found in the cell membrane. The enzyme catalyses nitrate + a quinol = a quinone + nitrite + H2O. In terms of biological role, the nitrate reductase enzyme complex allows E.coli to use nitrate as an electron acceptor during anaerobic growth. The beta chain is an electron transfer unit containing four cysteine clusters involved in the formation of iron-sulfur centers. Electrons are transferred from the gamma chain to the molybdenum cofactor of the alpha subunit. In Escherichia coli (strain K12), this protein is Respiratory nitrate reductase 1 beta chain (narH).